Reading from the N-terminus, the 165-residue chain is UPF0303 protein BamMC406_1480 (165 aa).

The protein belongs to the UPF0303 family.

This is UPF0303 protein BamMC406_1480 from Burkholderia ambifaria (strain MC40-6).